Consider the following 333-residue polypeptide: E3 ubiquitin-protein ligase MIR1 (333 aa).

Residues 1–60 form an RING-CH-type zinc finger; the sequence is MEDEDVPVCWICNEELGNERFRACGCTGELENVHRSCLSTWLTISRNTACQICGVVYNTR. Topologically, residues 1–82 are cytoplasmic; sequence MEDEDVPVCW…PRLTYQEGLE (82 aa). Zn(2+)-binding residues include Cys-9, Cys-12, Cys-24, Cys-26, His-34, Cys-37, Cys-50, and Cys-53. Residues 83–103 form a helical membrane-spanning segment; the sequence is LIVFIFIMTLGAAGLAAATWV. Topologically, residues 104–121 are extracellular; the sequence is WLYIVGGHDPEIDHVAAA. The helical transmembrane segment at 122-142 threads the bilayer; sequence AYYVFFVFYQLFVVFGLGAFF. The Cytoplasmic segment spans residues 143–333; sequence HMMRHVGRAY…SAVSSALMFH (191 aa). The segment at 187 to 257 is disordered; sequence GDNQDEEGPA…GRDDNVEPTA (71 aa). Over residues 195–221 the composition is skewed to low complexity; the sequence is PAGAAPGDQNGPAGAAPGDQDGPADGA. Residues 235–252 show a composition bias toward basic and acidic residues; the sequence is AGYKEAGEPTHNDGRDDN.

In terms of assembly, binds human MHC-I and CD1D.

It is found in the host cell membrane. Its subcellular location is the host endoplasmic reticulum. The enzyme catalyses [E2 ubiquitin-conjugating enzyme]-S-ubiquitinyl-L-cysteine + [acceptor protein]-L-cysteine = [E2 ubiquitin-conjugating enzyme]-L-cysteine + [acceptor protein]-S-ubiquitinyl-L-cysteine.. Its pathway is protein modification; protein ubiquitination. In terms of biological role, membrane-bound E3 ubiquitin ligase expressed during late stages of lytic replication to mediate polyubiquitination of various host membrane proteins related to the immune response. Promotes ubiquitination and subsequent degradation of host MHC-I and CD1D molecules, DC-SIGN and DC-SIGNR, presumably to prevent lysis of infected cells by cytotoxic T-lymphocytes. Binds target molecules through transmembrane interaction. E3 ubiquitin-protein ligases accept ubiquitin from specific E2 ubiquitin-conjugating enzymes, and then transfer it to target protein. The result of this ubiquitination is the enhancement of the endocytosis of the target chain and the delivery to the lysosome, where it is proteolytically destroyed. Induces ubiquitination not only on lysines, but also on cysteine residues. This chain is E3 ubiquitin-protein ligase MIR1 (K3), found in Human herpesvirus 8 type P (isolate GK18) (HHV-8).